The primary structure comprises 148 residues: uncharacterized protein (148 aa).

It localises to the plastid. The protein localises to the chloroplast. This is an uncharacterized protein from Porphyra purpurea (Red seaweed).